Consider the following 229-residue polypeptide: Potassium/proton antiporter CemA (229 aa).

Helical transmembrane passes span 6-26 (AFIPFFYFTSIVFLPWLISLC), 107-127 (ILHFSTNLISFVILSGYSFWG), and 189-209 (ILSGLVSTFPVILDTIFKYWI).

This sequence belongs to the CemA family.

The protein localises to the plastid. The protein resides in the chloroplast inner membrane. The enzyme catalyses K(+)(in) + H(+)(out) = K(+)(out) + H(+)(in). Functionally, contributes to K(+)/H(+) antiport activity by supporting proton efflux to control proton extrusion and homeostasis in chloroplasts in a light-dependent manner to modulate photosynthesis. Prevents excessive induction of non-photochemical quenching (NPQ) under continuous-light conditions. Indirectly promotes efficient inorganic carbon uptake into chloroplasts. This is Potassium/proton antiporter CemA from Olimarabidopsis pumila (Dwarf rocket).